Consider the following 214-residue polypeptide: 3,4-dihydroxy-2-butanone 4-phosphate synthase (214 aa).

D-ribulose 5-phosphate is bound by residues 37-38 (RE), Asp-42, 150-154 (RRGHT), and Glu-174. Glu-38 serves as a coordination point for Mg(2+). Residue His-153 coordinates Mg(2+).

This sequence belongs to the DHBP synthase family. Homodimer. Mg(2+) serves as cofactor. The cofactor is Mn(2+).

It carries out the reaction D-ribulose 5-phosphate = (2S)-2-hydroxy-3-oxobutyl phosphate + formate + H(+). Its pathway is cofactor biosynthesis; riboflavin biosynthesis; 2-hydroxy-3-oxobutyl phosphate from D-ribulose 5-phosphate: step 1/1. In terms of biological role, catalyzes the conversion of D-ribulose 5-phosphate to formate and 3,4-dihydroxy-2-butanone 4-phosphate. The chain is 3,4-dihydroxy-2-butanone 4-phosphate synthase from Histophilus somni (strain 2336) (Haemophilus somnus).